The chain runs to 264 residues: S-adenosylmethionine decarboxylase proenzyme (264 aa).

Ser-113 serves as the catalytic Schiff-base intermediate with substrate; via pyruvic acid. Ser-113 carries the pyruvic acid (Ser); by autocatalysis modification. The active-site Proton acceptor; for processing activity is the His-118. Residue Cys-141 is the Proton donor; for catalytic activity of the active site.

It belongs to the prokaryotic AdoMetDC family. Type 2 subfamily. Heterooctamer of four alpha and four beta chains arranged as a tetramer of alpha/beta heterodimers. Pyruvate serves as cofactor. Is synthesized initially as an inactive proenzyme. Formation of the active enzyme involves a self-maturation process in which the active site pyruvoyl group is generated from an internal serine residue via an autocatalytic post-translational modification. Two non-identical subunits are generated from the proenzyme in this reaction, and the pyruvate is formed at the N-terminus of the alpha chain, which is derived from the carboxyl end of the proenzyme. The post-translation cleavage follows an unusual pathway, termed non-hydrolytic serinolysis, in which the side chain hydroxyl group of the serine supplies its oxygen atom to form the C-terminus of the beta chain, while the remainder of the serine residue undergoes an oxidative deamination to produce ammonia and the pyruvoyl group blocking the N-terminus of the alpha chain.

The catalysed reaction is S-adenosyl-L-methionine + H(+) = S-adenosyl 3-(methylsulfanyl)propylamine + CO2. Its pathway is amine and polyamine biosynthesis; S-adenosylmethioninamine biosynthesis; S-adenosylmethioninamine from S-adenosyl-L-methionine: step 1/1. Catalyzes the decarboxylation of S-adenosylmethionine to S-adenosylmethioninamine (dcAdoMet), the propylamine donor required for the synthesis of the polyamines spermine and spermidine from the diamine putrescine. This Xanthomonas euvesicatoria pv. vesicatoria (strain 85-10) (Xanthomonas campestris pv. vesicatoria) protein is S-adenosylmethionine decarboxylase proenzyme.